The chain runs to 65 residues: Large ribosomal subunit protein bL33c (65 aa).

This sequence belongs to the bacterial ribosomal protein bL33 family.

The protein localises to the plastid. It is found in the chloroplast. In Gracilaria tenuistipitata var. liui (Red alga), this protein is Large ribosomal subunit protein bL33c.